Here is a 574-residue protein sequence, read N- to C-terminus: Alpha-farnesene synthase (574 aa).

D326, D330, and E478 together coordinate Mn(2+). The DDXXD motif motif lies at 326–330 (DDIYD).

Belongs to the terpene synthase family. Tpsd subfamily. Requires Mn(2+) as cofactor.

The protein resides in the cytoplasm. It carries out the reaction (2E,6E)-farnesyl diphosphate = (3E,6E)-alpha-farnesene + diphosphate. It functions in the pathway terpene metabolism; oleoresin biosynthesis. In terms of biological role, involved in sesquiterpene (C15) biosynthesis. The major product is alpha-farnesene. The sequence is that of Alpha-farnesene synthase (PT5) from Pinus taeda (Loblolly pine).